We begin with the raw amino-acid sequence, 206 residues long: dITP/XTP pyrophosphatase (206 aa).

S7–K12 contributes to the substrate binding site. D72 serves as the catalytic Proton acceptor. D72 contacts Mg(2+). Substrate contacts are provided by residues S73, F155–D158, K182, and H187–R188.

Belongs to the HAM1 NTPase family. In terms of assembly, homodimer. Requires Mg(2+) as cofactor.

It catalyses the reaction XTP + H2O = XMP + diphosphate + H(+). The catalysed reaction is dITP + H2O = dIMP + diphosphate + H(+). It carries out the reaction ITP + H2O = IMP + diphosphate + H(+). In terms of biological role, pyrophosphatase that catalyzes the hydrolysis of nucleoside triphosphates to their monophosphate derivatives, with a high preference for the non-canonical purine nucleotides XTP (xanthosine triphosphate), dITP (deoxyinosine triphosphate) and ITP. Seems to function as a house-cleaning enzyme that removes non-canonical purine nucleotides from the nucleotide pool, thus preventing their incorporation into DNA/RNA and avoiding chromosomal lesions. This Corynebacterium glutamicum (strain R) protein is dITP/XTP pyrophosphatase.